The chain runs to 293 residues: Small ribosomal subunit protein uS3 (293 aa).

Positions 39–107 (VREYLKAKLK…PVAVNIEEVR (69 aa)) constitute a KH type-2 domain. Positions 210–293 (RNDLPAVETP…PATAADGKGE (84 aa)) are disordered. Over residues 219–238 (PRPEEERRPRGPRRDGRPGG) the composition is skewed to basic and acidic residues.

Belongs to the universal ribosomal protein uS3 family. In terms of assembly, part of the 30S ribosomal subunit. Forms a tight complex with proteins S10 and S14.

Functionally, binds the lower part of the 30S subunit head. Binds mRNA in the 70S ribosome, positioning it for translation. The chain is Small ribosomal subunit protein uS3 from Paracidovorax citrulli (strain AAC00-1) (Acidovorax citrulli).